Here is a 1119-residue protein sequence, read N- to C-terminus: Agglutinin-like protein 3 (1119 aa).

The first 17 residues, 1–17, serve as a signal peptide directing secretion; that stretch reads MLQQYTLLLIYLSVATA. Intrachain disulfides connect C73–C150, C96–C112, C205–C298, and C227–C256. 3 ALS repeats span residues 365 to 396, 401 to 432, and 438 to 469; these read TTIT…VDIP, TTVT…VQVP, and VTTT…IREP. N-linked (GlcNAc...) asparagine glycosylation occurs at N471. ALS repeat units lie at residues 474–505 and 510–541; these read VTTT…IKEP. An N-linked (GlcNAc...) asparagine glycan is attached at N543. An ALS 6 repeat occupies 546-577; sequence VTTTEYWSQSYTTTTTVTAPPGGTDTVLVREP. Residue N579 is glycosylated (N-linked (GlcNAc...) asparagine). ALS repeat units follow at residues 582–613 and 618–649; these read VTTT…IREP. N651 is a glycosylation site (N-linked (GlcNAc...) asparagine). The ALS 9 repeat unit spans residues 654-685; it reads VTTTEYWSQSYATTTTITAPPGETDTVLIREP. The N-linked (GlcNAc...) asparagine glycan is linked to N687. The stretch at 690 to 721 is one ALS 10 repeat; that stretch reads VTTTEYWSQSFATTTTVTAPPGGTDTVIIREP. N723 is a glycosylation site (N-linked (GlcNAc...) asparagine). The ALS 11 repeat unit spans residues 726–757; sequence VTTTEYWSQSYATTTTITAPPGETDTVLIREP. N-linked (GlcNAc...) asparagine glycosylation is present at N759. 2 ALS repeats span residues 762-793 and 798-827; these read VTTT…IREP and VTTT…VIIY. N-linked (GlcNAc...) asparagine glycosylation is present at N845. Positions 892–1077 are disordered; the sequence is MVTNTVDSTT…QYNSDTQQTT (186 aa). The segment covering 894 to 929 has biased composition (low complexity); sequence TNTVDSTTTESTSQSPSGIFSESGVSVETESSTVTT. Polar residues-rich tracts occupy residues 930–941 and 947–965; these read AQTNPSVPTTES and TKGN…NVKS. Low complexity predominate over residues 974 to 983; sequence TTSTAASTST. N987 carries N-linked (GlcNAc...) asparagine glycosylation. Low complexity-rich tracts occupy residues 998–1022 and 1035–1048; these read ASSP…STSV and APSA…TTTA. N-linked (GlcNAc...) asparagine glycans are attached at residues N1050 and N1061. Low complexity predominate over residues 1057 to 1077; the sequence is TTSTNQSQSQSQYNSDTQQTT. Residue S1098 is the site of GPI-anchor amidated serine attachment. Residues 1099-1119 constitute a propeptide, removed in mature form; that stretch reads GSVIQHSTWLCGLITLLSLFI.

This sequence belongs to the ALS family. In terms of processing, the GPI-anchor is attached to the protein in the endoplasmic reticulum and serves to target the protein to the cell surface. There, the glucosamine-inositol phospholipid moiety is cleaved off and the GPI-modified mannoprotein is covalently attached via its lipidless GPI glycan remnant to the 1,6-beta-glucan of the outer cell wall layer.

It is found in the cell membrane. It localises to the secreted. The protein resides in the cell wall. Functionally, cell surface adhesion protein which mediates both yeast-to-host tissue adherence and yeast aggregation. Plays an important role in the biofilm formation and pathogenesis of C.albicans infections. Necessary for C.albicans to bind to N-cadherin on endothelial cells and E-cadherin on oral epithelial cells and subsequent endocytosis by these cells. During disseminated infection, mediates initial trafficking to the brain and renal cortex and contributes to fungal persistence in the kidneys. In Candida albicans (Yeast), this protein is Agglutinin-like protein 3 (ALS3).